The primary structure comprises 121 residues: Outer membrane lipoprotein BBA14 (121 aa).

Positions 1–19 (MQIKNFPFLFLLNSLIIFS) are cleaved as a signal peptide. C20 carries N-palmitoyl cysteine lipidation. C20 is lipidated: S-diacylglycerol cysteine.

Its subcellular location is the cell outer membrane. Functionally, outer membrane lipoprotein that could act as a component of a potential toxin-antitoxin system in B.burgdorferi which could serve as a plasmid stabilization mechanism in a growing bacterial population. This Borreliella burgdorferi (strain ATCC 35210 / DSM 4680 / CIP 102532 / B31) (Borrelia burgdorferi) protein is Outer membrane lipoprotein BBA14.